Consider the following 711-residue polypeptide: Dendrin (711 aa).

4 disordered regions span residues 1–22, 49–273, 324–446, and 479–677; these read MLDGPLFSEGPDSPRELQDEES, APSR…KKRL, DLNS…SQGL, and PSGV…AELS. Residues 75–84 show a composition bias toward pro residues; that stretch reads PGSPQPPPRR. Residues 102 to 134 are a coiled coil; sequence LAEVRAREQEKRKAASQEREAKETERKRRKAGG. Over residues 105-127 the composition is skewed to basic and acidic residues; that stretch reads VRAREQEKRKAASQEREAKETER. The interval 113–131 is nuclear localization; the sequence is RKAASQEREAKETERKRRK. A compositionally biased stretch (low complexity) spans 150 to 161; the sequence is APRVAQLAGLPA. An interaction with MAGI2 region spans residues 186-236; that stretch reads GSAWAGPWGGRRPGPPSYEAHLLLRGSAGTAPRRRWDRPPPYVAPPSYEGP. Composition is skewed to low complexity over residues 252–262 and 346–356; these read PTSSAPAATPA and APAGSATAAPC. Residues 341–436 are interaction with ACTN1; it reads AGTEIAPAGS…LEGWKATRRA (96 aa). Serine 389 carries the post-translational modification Phosphoserine. Positions 408-709 are interaction with CD2AP and NPHS1; the sequence is GGTGWRESLG…IRGTQQGNRK (302 aa). Positions 529–546 are enriched in basic and acidic residues; the sequence is GEAEGGRPGDSTLEERTF.

In terms of assembly, forms a ternary complex with MAGI2 and SH3KBP1; recruits DDN to the cytoplasm. Interacts with MAGI1. Interacts with ACTN1 and may interact with WWC1. Interacts with the podocyte slit diaphragm proteins CD2AP, NPHS1 and NPHS2; the interaction with CD2AP and NPHS1 is direct. In terms of tissue distribution, specifically expressed in brain and kidney. Expressed in kidney glomerular capillary loops (at protein level).

It is found in the cell projection. The protein localises to the dendritic spine membrane. Its subcellular location is the cytoplasm. It localises to the endoplasmic reticulum membrane. The protein resides in the perikaryon. It is found in the nucleus. Its function is as follows. Promotes apoptosis of kidney glomerular podocytes. Podocytes are highly specialized cells essential to the ultrafiltration of blood, resulting in the extraction of urine and the retention of protein. This is Dendrin (DDN) from Homo sapiens (Human).